We begin with the raw amino-acid sequence, 187 residues long: MAHNGRLTVLTGPSGVGKGTLVKRLLDQHPEIWLSVSATTRQPRAGEEEGVSYFFHPRDTFDALVAAGGLLEWAEFASNCYGTPRDPVEEHLAAGRPVLLEIELEGARQVRTSFPDAFQVFLAPPSFAELERRIRGRGTDTEDAIQRRLARAREELNAQNEFDAVVVNDDLDQALKQLETHMQLQAP.

The 179-residue stretch at 5 to 183 (GRLTVLTGPS…ALKQLETHMQ (179 aa)) folds into the Guanylate kinase-like domain. 12 to 19 (GPSGVGKG) contacts ATP.

It belongs to the guanylate kinase family.

It is found in the cytoplasm. The enzyme catalyses GMP + ATP = GDP + ADP. The catalysed reaction is dZMP + ATP = dZDP + ADP. It functions in the pathway purine metabolism. Functionally, essential for recycling GMP and indirectly, cGMP. In terms of biological role, (Microbial infection) Catalyzes the phosphorylation of dZMP to dZDP, when the bacterium is infected by a phage that produces the substrate for the synthesis of dZTP (2- amino-2'-deoxyadenosine 5'-triphosphate), which is then used by the phage as a DNA polymerase substrate. This chain is Guanylate kinase, found in Synechococcus sp. (strain CC9902).